A 50-amino-acid polypeptide reads, in one-letter code: MQTLSSAPDPAASIAVTILAILLALTGFGLWSAFGPKAKKLTDPWDDHDD.

A helical transmembrane segment spans residues 14–34 (IAVTILAILLALTGFGLWSAF).

This sequence belongs to the PsbN family.

Its subcellular location is the cellular thylakoid membrane. In terms of biological role, may play a role in photosystem I and II biogenesis. This Prochlorococcus marinus (strain MIT 9215) protein is Protein PsbN.